A 1714-amino-acid polypeptide reads, in one-letter code: Collagen alpha-1(XXIV) chain (1714 aa).

The N-terminal stretch at 1-35 is a signal peptide; it reads MHLRAHRTRRGKVSPTAKTKSLLHFIVLCVAGVVV. One can recognise a Laminin G-like domain in the interval 141 to 217; it reads KLVVHIRGKQ…MNNNSIHFEG (77 aa). N-linked (GlcNAc...) asparagine glycosylation is found at N155, N321, and N376. Collagen-like domains follow at residues 487-542, 552-611, 660-719, 741-797, 798-857, 858-887, 888-947, 948-1007, 1011-1052, 1053-1112, 1116-1170, 1172-1196, 1201-1249, 1252-1306, 1309-1353, 1354-1413, and 1420-1479; these read LRGP…PGFS, GDQG…EGNP, GPAG…KGEQ, GPPG…RGPP, GPPG…TGPV, GLPGEVGMTGSIGEKGERGSPGPLGPQGEK, GVMG…KGEK, GDQG…PGEM, GPPG…PGAP, GEEG…PGQR, GKKG…GIPG, RGHQGQPGPSGLPGPKGEKGYPGED, GPPG…GEPG, GEQG…GNPG, GPPG…QGPK, GEQG…EGDA, and GPKG…PGPR. The interval 487 to 1481 is disordered; sequence LRGPKGDTGP…PPGAPGPRKQ (995 aa). The segment covering 496–505 has biased composition (pro residues); the sequence is PPGPPGPAGI. 2 stretches are compositionally biased toward low complexity: residues 574 to 587 and 685 to 701; these read HPGLPGLPGEQGIP and SVGPVGPIGPAGIPGPM. Residues 893–902 are compositionally biased toward pro residues; the sequence is PGPPGVPGPI. A compositionally biased stretch (low complexity) spans 985 to 1019; sequence DRGLPGEPGLRGLQGDVGPPGEMGMEGPPGTEGES. 2 stretches are compositionally biased toward gly residues: residues 1035–1044 and 1065–1074; these read GSVGGTGEPG and GVPGGRGLPG. Low complexity-rich tracts occupy residues 1132-1145 and 1174-1186; these read SRGPPGKIGKSGPK and HQGQPGPSGLPGP. The span at 1256-1266 shows a compositional bias: basic and acidic residues; that stretch reads LKGERGSEGNK. The segment covering 1271–1293 has biased composition (low complexity); sequence APGPSGKPGIPGLQGLLGPKGIQ. Gly residues predominate over residues 1318–1327; that stretch reads GIRGGPGRTG. The span at 1466 to 1476 shows a compositional bias: pro residues; that stretch reads QPGPPGPPGAP. Residues 1515-1714 form the Fibrillar collagen NC1 domain; the sequence is EEIFKTLNYL…YIDSSSVCFL (200 aa).

Belongs to the fibrillar collagen family.

It localises to the secreted. It is found in the extracellular space. The protein resides in the extracellular matrix. Its function is as follows. May participate in regulating type I collagen fibrillogenesis at specific anatomical locations during fetal development. The protein is Collagen alpha-1(XXIV) chain (COL24A1) of Homo sapiens (Human).